Here is a 341-residue protein sequence, read N- to C-terminus: Ketol-acid reductoisomerase (NADP(+)) (341 aa).

The KARI N-terminal Rossmann domain maps to 2–181; that stretch reads AKVYYNGDAN…GAARAGVLET (180 aa). NADP(+)-binding positions include 25 to 28, Arg48, Ser52, and 82 to 85; these read YGSQ and DEKQ. His107 is an active-site residue. Gly133 provides a ligand contact to NADP(+). Positions 182-327 constitute a KARI C-terminal knotted domain; that stretch reads TFKEETETDL…RELRSMMPFV (146 aa). Mg(2+) is bound by residues Asp190, Glu194, Glu226, and Glu230. Ser251 contributes to the substrate binding site.

This sequence belongs to the ketol-acid reductoisomerase family. It depends on Mg(2+) as a cofactor.

It catalyses the reaction (2R)-2,3-dihydroxy-3-methylbutanoate + NADP(+) = (2S)-2-acetolactate + NADPH + H(+). The catalysed reaction is (2R,3R)-2,3-dihydroxy-3-methylpentanoate + NADP(+) = (S)-2-ethyl-2-hydroxy-3-oxobutanoate + NADPH + H(+). It functions in the pathway amino-acid biosynthesis; L-isoleucine biosynthesis; L-isoleucine from 2-oxobutanoate: step 2/4. The protein operates within amino-acid biosynthesis; L-valine biosynthesis; L-valine from pyruvate: step 2/4. Functionally, involved in the biosynthesis of branched-chain amino acids (BCAA). Catalyzes an alkyl-migration followed by a ketol-acid reduction of (S)-2-acetolactate (S2AL) to yield (R)-2,3-dihydroxy-isovalerate. In the isomerase reaction, S2AL is rearranged via a Mg-dependent methyl migration to produce 3-hydroxy-3-methyl-2-ketobutyrate (HMKB). In the reductase reaction, this 2-ketoacid undergoes a metal-dependent reduction by NADPH to yield (R)-2,3-dihydroxy-isovalerate. This Geobacillus thermodenitrificans (strain NG80-2) protein is Ketol-acid reductoisomerase (NADP(+)).